Here is a 327-residue protein sequence, read N- to C-terminus: Beta-ketoacyl-[acyl-carrier-protein] synthase III (327 aa).

Residues cysteine 112 and histidine 253 contribute to the active site. The tract at residues 254–258 (QANER) is ACP-binding. Asparagine 283 is an active-site residue.

It belongs to the thiolase-like superfamily. FabH family. In terms of assembly, homodimer.

It is found in the cytoplasm. It catalyses the reaction malonyl-[ACP] + acetyl-CoA + H(+) = 3-oxobutanoyl-[ACP] + CO2 + CoA. It participates in lipid metabolism; fatty acid biosynthesis. Functionally, catalyzes the condensation reaction of fatty acid synthesis by the addition to an acyl acceptor of two carbons from malonyl-ACP. Catalyzes the first condensation reaction which initiates fatty acid synthesis and may therefore play a role in governing the total rate of fatty acid production. Possesses both acetoacetyl-ACP synthase and acetyl transacylase activities. Its substrate specificity determines the biosynthesis of branched-chain and/or straight-chain of fatty acids. The sequence is that of Beta-ketoacyl-[acyl-carrier-protein] synthase III from Chlamydia muridarum (strain MoPn / Nigg).